Consider the following 497-residue polypeptide: Sestrin homolog (497 aa).

Phosphoserine is present on residues serine 185 and serine 190. Residues 226–241 are compositionally biased toward polar residues; the sequence is NANPDYDSQTAASSNG. Residues 226–255 form a disordered region; the sequence is NANPDYDSQTAASSNGGAPPDSANAVADGP.

The protein belongs to the sestrin family. In terms of assembly, associates with the GATOR2 complex; the interaction is probably direct. Associates with the GATOR1 complex; the interaction is probably indirect and mediated by the GATOR2 complex. In terms of tissue distribution, highly expressed in muscle-enriched tissues (at protein level).

Its subcellular location is the nucleus. The protein localises to the cytoplasm. Its function is as follows. Functions as a negative feedback regulator of mTOR function. The sequence is that of Sestrin homolog from Drosophila melanogaster (Fruit fly).